Consider the following 206-residue polypeptide: Ribosomal RNA small subunit methyltransferase G (206 aa).

Residues glycine 74, leucine 79, 125–126, and arginine 140 each bind S-adenosyl-L-methionine; that span reads VE.

Belongs to the methyltransferase superfamily. RNA methyltransferase RsmG family.

It is found in the cytoplasm. It catalyses the reaction guanosine(527) in 16S rRNA + S-adenosyl-L-methionine = N(7)-methylguanosine(527) in 16S rRNA + S-adenosyl-L-homocysteine. In terms of biological role, specifically methylates the N7 position of guanine in position 527 of 16S rRNA. The polypeptide is Ribosomal RNA small subunit methyltransferase G (Shewanella sp. (strain MR-4)).